We begin with the raw amino-acid sequence, 393 residues long: S-adenosylmethionine synthase (393 aa).

An ATP-binding site is contributed by His-16. Asp-18 lines the Mg(2+) pocket. Glu-44 contributes to the K(+) binding site. Glu-57 and Gln-100 together coordinate L-methionine. Residues 100–110 form a flexible loop region; the sequence is QSPDIVMGVDG. Residues 165 to 167, 231 to 232, Asp-240, 246 to 247, and Lys-267 contribute to the ATP site; these read DAK, RF, and RK. Asp-240 lines the L-methionine pocket. Lys-271 contributes to the L-methionine binding site.

The protein belongs to the AdoMet synthase family. As to quaternary structure, homotetramer; dimer of dimers. Mg(2+) serves as cofactor. Requires K(+) as cofactor.

The protein localises to the cytoplasm. It catalyses the reaction L-methionine + ATP + H2O = S-adenosyl-L-methionine + phosphate + diphosphate. Its pathway is amino-acid biosynthesis; S-adenosyl-L-methionine biosynthesis; S-adenosyl-L-methionine from L-methionine: step 1/1. Catalyzes the formation of S-adenosylmethionine (AdoMet) from methionine and ATP. The overall synthetic reaction is composed of two sequential steps, AdoMet formation and the subsequent tripolyphosphate hydrolysis which occurs prior to release of AdoMet from the enzyme. This is S-adenosylmethionine synthase from Coxiella burnetii (strain CbuG_Q212) (Coxiella burnetii (strain Q212)).